A 206-amino-acid chain; its full sequence is tRNA(Phe) 7-((3-amino-3-carboxypropyl)-4-demethylwyosine(37)-N(4))-methyltransferase 2 (206 aa).

Belongs to the TYW3 family.

It catalyses the reaction 4-demethyl-7-[(3S)-3-amino-3-carboxypropyl]wyosine(37) in tRNA(Phe) + S-adenosyl-L-methionine = 7-[(3S)-3-amino-3-carboxypropyl]wyosine(37) in tRNA(Phe) + S-adenosyl-L-homocysteine + H(+). Its function is as follows. S-adenosyl-L-methionine-dependent methyltransferase that acts as a component of the wyosine derivatives biosynthesis pathway. Probably methylates N-4 position of wybutosine-86 to produce wybutosine-72. The protein is tRNA(Phe) 7-((3-amino-3-carboxypropyl)-4-demethylwyosine(37)-N(4))-methyltransferase 2 of Pyrococcus furiosus (strain ATCC 43587 / DSM 3638 / JCM 8422 / Vc1).